The primary structure comprises 123 residues: PTS system glucitol/sorbitol-specific EIIA component (123 aa).

The PTS EIIA type-5 domain maps to 1–116 (MTVIYQTTIT…PDDIAPGSVL (116 aa)). The active-site Tele-phosphohistidine intermediate is His-43. The residue at position 43 (His-43) is a Phosphohistidine; by HPr.

It is found in the cytoplasm. The phosphoenolpyruvate-dependent sugar phosphotransferase system (sugar PTS), a major carbohydrate active transport system, catalyzes the phosphorylation of incoming sugar substrates concomitantly with their translocation across the cell membrane. The enzyme II complex composed of SrlA, SrlB and SrlE is involved in glucitol/sorbitol transport. The protein is PTS system glucitol/sorbitol-specific EIIA component (srlB) of Shigella flexneri.